A 354-amino-acid chain; its full sequence is UDP-N-acetylglucosamine--N-acetylmuramyl-(pentapeptide) pyrophosphoryl-undecaprenol N-acetylglucosamine transferase (354 aa).

UDP-N-acetyl-alpha-D-glucosamine contacts are provided by residues 12–14, Asn124, Arg163, Ser187, Ile240, and Gln285; that span reads TGG.

It belongs to the glycosyltransferase 28 family. MurG subfamily.

It localises to the cell inner membrane. The enzyme catalyses di-trans,octa-cis-undecaprenyl diphospho-N-acetyl-alpha-D-muramoyl-L-alanyl-D-glutamyl-meso-2,6-diaminopimeloyl-D-alanyl-D-alanine + UDP-N-acetyl-alpha-D-glucosamine = di-trans,octa-cis-undecaprenyl diphospho-[N-acetyl-alpha-D-glucosaminyl-(1-&gt;4)]-N-acetyl-alpha-D-muramoyl-L-alanyl-D-glutamyl-meso-2,6-diaminopimeloyl-D-alanyl-D-alanine + UDP + H(+). Its pathway is cell wall biogenesis; peptidoglycan biosynthesis. Cell wall formation. Catalyzes the transfer of a GlcNAc subunit on undecaprenyl-pyrophosphoryl-MurNAc-pentapeptide (lipid intermediate I) to form undecaprenyl-pyrophosphoryl-MurNAc-(pentapeptide)GlcNAc (lipid intermediate II). This is UDP-N-acetylglucosamine--N-acetylmuramyl-(pentapeptide) pyrophosphoryl-undecaprenol N-acetylglucosamine transferase from Methylococcus capsulatus (strain ATCC 33009 / NCIMB 11132 / Bath).